A 309-amino-acid polypeptide reads, in one-letter code: Sulfate adenylyltransferase subunit 2 (309 aa).

Belongs to the PAPS reductase family. CysD subfamily. Heterodimer composed of CysD, the smaller subunit, and CysN.

It catalyses the reaction sulfate + ATP + H(+) = adenosine 5'-phosphosulfate + diphosphate. It participates in sulfur metabolism; hydrogen sulfide biosynthesis; sulfite from sulfate: step 1/3. Its function is as follows. With CysN forms the ATP sulfurylase (ATPS) that catalyzes the adenylation of sulfate producing adenosine 5'-phosphosulfate (APS) and diphosphate, the first enzymatic step in sulfur assimilation pathway. APS synthesis involves the formation of a high-energy phosphoric-sulfuric acid anhydride bond driven by GTP hydrolysis by CysN coupled to ATP hydrolysis by CysD. This chain is Sulfate adenylyltransferase subunit 2, found in Aeromonas salmonicida (strain A449).